Consider the following 424-residue polypeptide: Dehydrogenase FUM7 (424 aa).

This sequence belongs to the iron-containing alcohol dehydrogenase family. Requires Fe cation as cofactor.

Its pathway is mycotoxin biosynthesis. In terms of biological role, dehydrogenase; part of the gene cluster that mediates the biosynthesis of fumonisins B1 (FB1), B2 (FB2), B3 (FB3), and B4 (FB4), which are carcinogenic mycotoxins. Within the pathway, FUM7 is involved the addition of the tricarballylic moieties to the carbon backbone. FUM7 dehydrogenase removes the C-3 hydroxyl of citrate to form tricarballylic acid either before or after the CoA activation by the FUM10 acyl-CoA synthetase and FUM14 catalyzed esterification of CoA-activated tricarballylic acid to the C-14 and C-15 hydroxyls of the fumonisin backbone. The biosynthesis starts with the FUM1-catalyzed carbon chain assembly from one molecule of acetyl-CoA, eight molecules of malonyl-CoA, and two molecules of methionine (in S-adenosyl form). The C18 polyketide chain is released from the enzyme by a nucleophilic attack of a carbanion, which is derived from R-carbon of alanine by decarboxylation, on the carbonyl carbon of polyketide acyl chain. This step is catalyzed by the pyridoxal 5'-phosphate-dependent aminoacyl transferase FUM8. The resultant 3-keto intermediate is then stereospecifically reduced to a 3-hydroxyl product by reductase FUM13. Subsequent oxidations at C-10 by the cytochrome P450 monooxygenase FUM2, C-14 and C-15 by FUM6, FUM12 or FUM15, tricarballylic esterification of the hydroxyl groups on C-14 and C-15 by acyltransferase FUM14, and C-5 hydroxylation by 2-keto-glutarate-dependent dioxygenase FUM3 furnish the biosynthesis of fumonisins. The tricarballylic moieties are most likely derived from the citric acid cycle, and their addition to the carbon backbone may involve FUM7, FUM10, FUM11 and FUM14. The sequence is that of Dehydrogenase FUM7 from Gibberella moniliformis (strain M3125 / FGSC 7600) (Maize ear and stalk rot fungus).